A 401-amino-acid polypeptide reads, in one-letter code: Imidazolonepropionase (401 aa).

H66 and H68 together coordinate Fe(3+). H66 and H68 together coordinate Zn(2+). Residues R75, Y138, and H171 each contribute to the 4-imidazolone-5-propanoate site. Y138 lines the N-formimidoyl-L-glutamate pocket. H236 contributes to the Fe(3+) binding site. H236 is a Zn(2+) binding site. Q239 contributes to the 4-imidazolone-5-propanoate binding site. D311 contacts Fe(3+). Zn(2+) is bound at residue D311. N313 and G315 together coordinate N-formimidoyl-L-glutamate. T316 lines the 4-imidazolone-5-propanoate pocket.

The protein belongs to the metallo-dependent hydrolases superfamily. HutI family. It depends on Zn(2+) as a cofactor. Requires Fe(3+) as cofactor.

It is found in the cytoplasm. The enzyme catalyses 4-imidazolone-5-propanoate + H2O = N-formimidoyl-L-glutamate. It participates in amino-acid degradation; L-histidine degradation into L-glutamate; N-formimidoyl-L-glutamate from L-histidine: step 3/3. Functionally, catalyzes the hydrolytic cleavage of the carbon-nitrogen bond in imidazolone-5-propanoate to yield N-formimidoyl-L-glutamate. It is the third step in the universal histidine degradation pathway. The sequence is that of Imidazolonepropionase from Acinetobacter baumannii (strain ACICU).